The sequence spans 233 residues: Uracil-DNA glycosylase (233 aa).

The active-site Proton acceptor is the Asp70.

The protein belongs to the uracil-DNA glycosylase (UDG) superfamily. UNG family.

Its subcellular location is the cytoplasm. The catalysed reaction is Hydrolyzes single-stranded DNA or mismatched double-stranded DNA and polynucleotides, releasing free uracil.. Its function is as follows. Excises uracil residues from the DNA which can arise as a result of misincorporation of dUMP residues by DNA polymerase or due to deamination of cytosine. This chain is Uracil-DNA glycosylase, found in Oleidesulfovibrio alaskensis (strain ATCC BAA-1058 / DSM 17464 / G20) (Desulfovibrio alaskensis).